A 151-amino-acid polypeptide reads, in one-letter code: Macrodomain Ter protein (151 aa).

It belongs to the MatP family. Homodimer.

It localises to the cytoplasm. Required for spatial organization of the terminus region of the chromosome (Ter macrodomain) during the cell cycle. Prevents early segregation of duplicated Ter macrodomains during cell division. Binds specifically to matS, which is a 13 bp signature motif repeated within the Ter macrodomain. This chain is Macrodomain Ter protein, found in Yersinia pseudotuberculosis serotype IB (strain PB1/+).